The primary structure comprises 470 residues: Desmin (470 aa).

The segment at 2–108 (SQAYSSSQRV…QEFLTTRTNE (107 aa)) is head. Phosphoserine; by CDK1 is present on Ser7. Ser12 carries the post-translational modification Phosphoserine; by AURKB. Omega-N-methylarginine is present on Arg16. Position 17 is a phosphothreonine; by AURKB and ROCK1 (Thr17). Ser28 bears the Phosphoserine; by CDK1 mark. Position 31 is a phosphoserine (Ser31). Ser32 carries the phosphoserine; by CDK1 modification. Arg37 is modified (asymmetric dimethylarginine; alternate). An Omega-N-methylarginine; alternate modification is found at Arg37. At Ser45 the chain carries Phosphoserine. Arg58 carries the ADP-ribosylarginine modification. At Ser60 the chain carries Phosphoserine; by AURKB. Residue Ser68 is modified to Phosphoserine. Omega-N-methylarginine is present on Arg70. Thr76 and Thr77 each carry phosphothreonine; by ROCK1. Ser81 is modified (phosphoserine). The IF rod domain occupies 108–416 (EKVELQELND…KLLEGEESRI (309 aa)). A coil 1A region spans residues 109 to 141 (KVELQELNDRFANYIEKVRFLEQQNAALAAEVN). The tract at residues 142-151 (RLKGREPTRV) is linker 1. Residues 152–252 (AELYEEELRE…HEEEIRELQA (101 aa)) form a coil 1B region. A linker 12 region spans residues 253–268 (QLQEQQVQVEMDMSKP). Residues 268–415 (PDLTAALRDI…RKLLEGEESR (148 aa)) form an interaction with NEB region. The tract at residues 269-287 (DLTAALRDIRAQYETIAAK) is coil 2A. The segment at 288-295 (NISEAEEW) is linker 2. Phosphoserine occurs at positions 290, 358, 361, and 424. A coil 2B region spans residues 296 to 412 (YKSKVSDLTQ…ATYRKLLEGE (117 aa)). Residues 413-470 (ESRINLPIQTYSALNFRETSPEQRGSEVHTKKTVMIKTIETRDGEVVSEATQQQHEVL) are tail. The interaction with CRYAB stretch occupies residues 438-453 (SEVHTKKTVMIKTIET).

This sequence belongs to the intermediate filament family. As to quaternary structure, homomer. Interacts with DST. Interacts with MTM1. Interacts with EPPK1; interaction is dependent of higher-order structure of intermediate filament. Interacts with CRYAB. Interacts with NEB (via nebulin repeats 160-164). Interacts (via rod region) with NEBL (via nebulin repeats 1-5). Interacts with ASB2 isoform 1; the interaction targets DES for proteasomal degradation. Interacts with PLEC isoform 1C. Interacts with PKP1. Interacts with FLII. ADP-ribosylation prevents ability to form intermediate filaments. Post-translationally, phosphorylation at Ser-7, Ser-28 and Ser-32 by CDK1, phosphorylation at Ser-60 by AURKB and phosphorylation at Thr-76 by ROCK1 contribute to efficient separation of desmin intermediate filaments during mitosis. In terms of processing, ubiquitination by a SCF-like complex containing ASB2 isoform 1 leads to proteasomal degradation.

Its subcellular location is the cytoplasm. The protein localises to the myofibril. The protein resides in the sarcomere. It localises to the z line. It is found in the cell membrane. Its subcellular location is the sarcolemma. The protein localises to the nucleus. The protein resides in the cell tip. It localises to the nucleus envelope. Its function is as follows. Muscle-specific type III intermediate filament essential for proper muscular structure and function. Plays a crucial role in maintaining the structure of sarcomeres, inter-connecting the Z-disks and forming the myofibrils, linking them not only to the sarcolemmal cytoskeleton, but also to the nucleus and mitochondria, thus providing strength for the muscle fiber during activity. In adult striated muscle they form a fibrous network connecting myofibrils to each other and to the plasma membrane from the periphery of the Z-line structures. May act as a sarcomeric microtubule-anchoring protein: specifically associates with detyrosinated tubulin-alpha chains, leading to buckled microtubules and mechanical resistance to contraction. Required for nuclear membrane integrity, via anchoring at the cell tip and nuclear envelope, resulting in maintenance of microtubule-derived intracellular mechanical forces. Contributes to the transcriptional regulation of the NKX2-5 gene in cardiac progenitor cells during a short period of cardiomyogenesis and in cardiac side population stem cells in the adult. Plays a role in maintaining an optimal conformation of nebulette (NEB) on heart muscle sarcomeres to bind and recruit cardiac alpha-actin. This Homo sapiens (Human) protein is Desmin (DES).